The primary structure comprises 216 residues: MRVAIIDYGSGNLRSATKAFERAAHESGISAEIDLTCDAQRVASADRIVLPGVGAYADCRRGLDAVPGMVEALNDTVLKKARPFLGICVGMQLMSERGLEKTVTNGLGWIAGDVREMVPSDASLKIPQIGWNRIHVKHSHPIFDGIPAGDDGLHAYFVHSYMLDAKNASDVLAVTDYGGDVTAAVGRDNMVGTQFHPEKSQLLGLSLIANFLKWKP.

The Glutamine amidotransferase type-1 domain maps to 2 to 216 (RVAIIDYGSG…LIANFLKWKP (215 aa)). Catalysis depends on C88, which acts as the Nucleophile. Active-site residues include H196 and E198.

In terms of assembly, heterodimer of HisH and HisF.

The protein localises to the cytoplasm. The enzyme catalyses 5-[(5-phospho-1-deoxy-D-ribulos-1-ylimino)methylamino]-1-(5-phospho-beta-D-ribosyl)imidazole-4-carboxamide + L-glutamine = D-erythro-1-(imidazol-4-yl)glycerol 3-phosphate + 5-amino-1-(5-phospho-beta-D-ribosyl)imidazole-4-carboxamide + L-glutamate + H(+). The catalysed reaction is L-glutamine + H2O = L-glutamate + NH4(+). The protein operates within amino-acid biosynthesis; L-histidine biosynthesis; L-histidine from 5-phospho-alpha-D-ribose 1-diphosphate: step 5/9. IGPS catalyzes the conversion of PRFAR and glutamine to IGP, AICAR and glutamate. The HisH subunit catalyzes the hydrolysis of glutamine to glutamate and ammonia as part of the synthesis of IGP and AICAR. The resulting ammonia molecule is channeled to the active site of HisF. The chain is Imidazole glycerol phosphate synthase subunit HisH from Brucella suis biovar 1 (strain 1330).